A 131-amino-acid polypeptide reads, in one-letter code: Large ribosomal subunit protein bL12 (131 aa).

This sequence belongs to the bacterial ribosomal protein bL12 family. As to quaternary structure, homodimer. Part of the ribosomal stalk of the 50S ribosomal subunit. Forms a multimeric L10(L12)X complex, where L10 forms an elongated spine to which 2 to 4 L12 dimers bind in a sequential fashion. Binds GTP-bound translation factors.

Its function is as follows. Forms part of the ribosomal stalk which helps the ribosome interact with GTP-bound translation factors. Is thus essential for accurate translation. This Prochlorococcus marinus (strain MIT 9515) protein is Large ribosomal subunit protein bL12.